The sequence spans 149 residues: Nucleoside diphosphate kinase (149 aa).

Lys9, Phe57, Arg85, Thr91, Arg102, and Asn112 together coordinate ATP. Catalysis depends on His115, which acts as the Pros-phosphohistidine intermediate.

This sequence belongs to the NDK family. Homotetramer. Requires Mg(2+) as cofactor.

The protein resides in the cytoplasm. It catalyses the reaction a 2'-deoxyribonucleoside 5'-diphosphate + ATP = a 2'-deoxyribonucleoside 5'-triphosphate + ADP. The catalysed reaction is a ribonucleoside 5'-diphosphate + ATP = a ribonucleoside 5'-triphosphate + ADP. Functionally, major role in the synthesis of nucleoside triphosphates other than ATP. The ATP gamma phosphate is transferred to the NDP beta phosphate via a ping-pong mechanism, using a phosphorylated active-site intermediate. This is Nucleoside diphosphate kinase from Nostoc punctiforme (strain ATCC 29133 / PCC 73102).